A 984-amino-acid polypeptide reads, in one-letter code: Shutoff protein (984 aa).

Positions 131–231 are disordered; it reads GVAAESDPSD…DLERDALVAP (101 aa). Over residues 137–147 the composition is skewed to acidic residues; that stretch reads DPSDDEPDPEP. The span at 148–159 shows a compositional bias: basic and acidic residues; the sequence is EYDHREADHDSD. Over residues 176-186 the composition is skewed to acidic residues; it reads VDEEPQDDSPS. Positions 190–202 are enriched in polar residues; it reads TASTVIEEAQTSA. The segment covering 205–216 has biased composition (basic and acidic residues); it reads DSHDDDTHRDDG. Positions 411–476 are binding to host EIF4G; that stretch reads LMETLLQPFA…AVRYTATLEL (66 aa). The 119-residue stretch at 479–597 folds into the RRM domain; it reads RVFREPSMVK…RLYSLPNPTA (119 aa). 2 disordered regions span residues 810–853 and 876–984; these read GVYK…GNRA and KVGP…RQEE. Phosphotyrosine; by host is present on Tyr812. Over residues 913-923 the composition is skewed to basic residues; it reads AGGRRFGRRNT. A compositionally biased stretch (low complexity) spans 945 to 958; that stretch reads RGQQGEHPTTSPSA.

It belongs to the adenoviridae shutoff protein family. As to quaternary structure, monomer. Interacts with hexon protein; this interaction allows chaperoning and trimerization of hexon proteins. Interacts (via N-terminus) with host initiation factor EIF4G (via C-terminus). Interacts (via RRM domain) with viral mRNAs that contain the tripartite leader; this interaction allows ribosome shunting and expression of viral late mRNAs. Might be cleaved by the viral protease. In terms of processing, phosphorylated. Tyrosine phosphorylation enhances preferential binding to tripartite leader mRNAs and allows ribosome shunting. Post-translationally, methylated. Asymmetric dimethylation by host PRMT1 of the Arg/Gly-rich region may regulate shutoff protein binding to hexon and promote the capsid assembly in the nucleus.

The protein localises to the host cytoplasm. Its function is as follows. Protein that inhibits host translation while promoting late viral translation by ribosome shunting. Blocks host cap-dependent translation by binding to eIF4G, displacing MKNK1 from cap initiation complexes and preventing EIF4E phosphorylation. Binds to the tripartite leader sequence of viral late mRNAs and recruits host eIF4G, PABPC1/poly-A binding protein and 40S ribosomes subunits on viral mRNAs, allowing ribosome shunting and efficient translation of late viral mRNAs even though conventional translation via ribosome scanning from the cap has been shut off in the host cell. During assembly, acts as a chaperone protein that helps hexon proteins assembly into trimers. This is Shutoff protein from Galliformes (FAdV-1).